The primary structure comprises 299 residues: ClpXP adapter protein SpxH (299 aa).

It belongs to the SpxH family. Interacts with Spx. Interacts with SpxO/YuzO.

The protein resides in the cytoplasm. Its activity is regulated as follows. Irreversible aggregation upon several stress conditions prevents interaction with Spx and therefore leads to Spx stabilization. Inhibited by interaction with SpxO/YuzO. In terms of biological role, adapter protein required for efficient degradation of Spx by ClpXP under non-stress conditions. Interaction with Spx stabilizes Spx and exposes the C-terminus of Spx for recognition and proteolysis by ClpXP. Is specific for Spx and does not enhance proteolysis by ClpCP protease. Probably binds 2 zinc ions. The chain is ClpXP adapter protein SpxH from Bacillus subtilis (strain 168).